The primary structure comprises 100 residues: Urease subunit gamma (100 aa).

The protein belongs to the urease gamma subunit family. Heterotrimer of UreA (gamma), UreB (beta) and UreC (alpha) subunits. Three heterotrimers associate to form the active enzyme.

The protein resides in the cytoplasm. It catalyses the reaction urea + 2 H2O + H(+) = hydrogencarbonate + 2 NH4(+). Its pathway is nitrogen metabolism; urea degradation; CO(2) and NH(3) from urea (urease route): step 1/1. The protein is Urease subunit gamma of Haemophilus influenzae (strain ATCC 51907 / DSM 11121 / KW20 / Rd).